Here is a 193-residue protein sequence, read N- to C-terminus: DNA damage-inducible transcript 4-like protein (193 aa).

Belongs to the DDIT4 family.

It is found in the cytoplasm. Functionally, inhibits cell growth by regulating the TOR signaling pathway upstream of the TSC1-TSC2 complex and downstream of AKT1. This is DNA damage-inducible transcript 4-like protein (DDIT4L) from Bos taurus (Bovine).